The following is a 382-amino-acid chain: MSLKEKTQSLFANAFGYPATHTIQAPGRVNLIGEHTDYNDGFVLPCAIDYQTVISCAPRDDRKVRVMAADYENQLDEFSLDTPIIAHENYQWANYVRGVVKHLQLRNNSFGGVDMVISGNVPQGAGLSSSASLEVAVGTVLQQLYHLPLDGAQIALNGQEAENQFVGCNCGIMDQLISALGKKDHALLIDCRSLGTKAVSMPKGVAVVIINSNFKRTLVGSEYNTRREQCETGARFFQQPALRDVTIEEFNAVAHELDPIVAKRVRHILTENARTVEAASALEQGDLKRMGELMAESHASMRDDFEITVPQIDTLVEIVKAVIGDKGGVRMTGGGFGGCIVALIPEELVPAVQQAVAEQYEAKTGIKETFYVCKPSQGAGQC.

34–37 (EHTD) is a binding site for substrate. 124–130 (GAGLSSS) provides a ligand contact to ATP. The Mg(2+) site is built by S130 and E162. D174 functions as the Proton acceptor in the catalytic mechanism. Y223 contributes to the substrate binding site.

The protein belongs to the GHMP kinase family. GalK subfamily.

The protein resides in the cytoplasm. It catalyses the reaction alpha-D-galactose + ATP = alpha-D-galactose 1-phosphate + ADP + H(+). It functions in the pathway carbohydrate metabolism; galactose metabolism. Functionally, catalyzes the transfer of the gamma-phosphate of ATP to D-galactose to form alpha-D-galactose-1-phosphate (Gal-1-P). This is Galactokinase from Escherichia coli O81 (strain ED1a).